Consider the following 294-residue polypeptide: Histone deacetylase HDT3 (294 aa).

N-acetylmethionine is present on Met-1. The required to repress transcription stretch occupies residues 2-5 (EFWG). The segment at 124–269 (QVNFQLPNED…TPKSAGAFGC (146 aa)) is disordered. The segment covering 140–188 (DDADGSEEDSSDDDDSENSGDEEEEKVTAESDSEEDDSSDDEEDDSSEE) has biased composition (acidic residues). A compositionally biased stretch (basic and acidic residues) spans 189-202 (ETPKKPEEPKKRSA). The span at 203–213 (EPNSSKNPASN) shows a compositional bias: low complexity. Polar residues predominate over residues 252–262 (GETSKQQQTPK). The C2H2-type zinc finger occupies 267-290 (FGCKSCTRTFTSEMGLQSHTKAKH).

Belongs to the histone deacetylase HD2 family. Interacts with DNMT2. In terms of tissue distribution, expressed in leaves, roots, stems, young plantlets, flowers and siliques. Highest levels in ovules, embryos, shoot apical meristems and first leaves. Also expressed in somatic embryos.

Its subcellular location is the nucleus. The protein localises to the nucleolus. Functionally, probably mediates the deacetylation of lysine residues on the N-terminal part of the core histones (H2A, H2B, H3 and H4). Histone deacetylation gives a tag for epigenetic repression and plays an important role in transcriptional regulation, cell cycle progression and developmental events. Involved in the modulation of abscisic acid and stress-responsive genes. This is Histone deacetylase HDT3 (HDT3) from Arabidopsis thaliana (Mouse-ear cress).